A 299-amino-acid chain; its full sequence is Putative pyrroline-5-carboxylate reductase 4 (299 aa).

Belongs to the pyrroline-5-carboxylate reductase family.

The catalysed reaction is L-proline + NADP(+) = (S)-1-pyrroline-5-carboxylate + NADPH + 2 H(+). The enzyme catalyses L-proline + NAD(+) = (S)-1-pyrroline-5-carboxylate + NADH + 2 H(+). Its pathway is amino-acid biosynthesis; L-proline biosynthesis; L-proline from L-glutamate 5-semialdehyde: step 1/1. The protein is Putative pyrroline-5-carboxylate reductase 4 of Caenorhabditis elegans.